Reading from the N-terminus, the 317-residue chain is Aspartate carbamoyltransferase catalytic subunit (317 aa).

Carbamoyl phosphate contacts are provided by arginine 64 and threonine 65. Residue lysine 92 participates in L-aspartate binding. Arginine 114, histidine 142, and glutamine 145 together coordinate carbamoyl phosphate. Residues arginine 176 and arginine 230 each coordinate L-aspartate. Residues glycine 271 and proline 272 each coordinate carbamoyl phosphate.

It belongs to the aspartate/ornithine carbamoyltransferase superfamily. ATCase family. As to quaternary structure, heterododecamer (2C3:3R2) of six catalytic PyrB chains organized as two trimers (C3), and six regulatory PyrI chains organized as three dimers (R2).

It carries out the reaction carbamoyl phosphate + L-aspartate = N-carbamoyl-L-aspartate + phosphate + H(+). It participates in pyrimidine metabolism; UMP biosynthesis via de novo pathway; (S)-dihydroorotate from bicarbonate: step 2/3. Its function is as follows. Catalyzes the condensation of carbamoyl phosphate and aspartate to form carbamoyl aspartate and inorganic phosphate, the committed step in the de novo pyrimidine nucleotide biosynthesis pathway. The sequence is that of Aspartate carbamoyltransferase catalytic subunit from Nitratidesulfovibrio vulgaris (strain ATCC 29579 / DSM 644 / CCUG 34227 / NCIMB 8303 / VKM B-1760 / Hildenborough) (Desulfovibrio vulgaris).